A 447-amino-acid polypeptide reads, in one-letter code: Glutamyl-tRNA(Gln) amidotransferase subunit A (447 aa).

Residues K51 and S126 each act as charge relay system in the active site. The active-site Acyl-ester intermediate is S150.

It belongs to the amidase family. GatA subfamily. Heterotrimer of A, B and C subunits.

The catalysed reaction is L-glutamyl-tRNA(Gln) + L-glutamine + ATP + H2O = L-glutaminyl-tRNA(Gln) + L-glutamate + ADP + phosphate + H(+). Functionally, allows the formation of correctly charged Gln-tRNA(Gln) through the transamidation of misacylated Glu-tRNA(Gln) in organisms which lack glutaminyl-tRNA synthetase. The reaction takes place in the presence of glutamine and ATP through an activated gamma-phospho-Glu-tRNA(Gln). This Helicobacter hepaticus (strain ATCC 51449 / 3B1) protein is Glutamyl-tRNA(Gln) amidotransferase subunit A.